Reading from the N-terminus, the 378-residue chain is Zinc transporter 7 (378 aa).

The Cytoplasmic portion of the chain corresponds to 1 to 37 (MLPLSIKDDEYKPPKFNLFGKISGWFRSILSDKTSRN). Residues 38-58 (LFFFLCLNLSFAFVELLYGIW) traverse the membrane as a helical segment. The Lumenal segment spans residues 59–67 (SNCLGLISD). The chain crosses the membrane as a helical span at residues 68–88 (SFHMFFDSTAILAGLAASVIS). Residues 89-102 (KWRDNDAFSYGYVR) are Cytoplasmic-facing. Residues 103–123 (AEVLAGFVNGLFLIFTAFFIF) traverse the membrane as a helical segment. The Lumenal segment spans residues 124-140 (SEGVERALAPPDVHHER). Residues 141-161 (LLLVSILGFVVNLVGIFVFNH) form a helical membrane-spanning segment. The interval 161–220 (HGGHGHSHGSGHGHSHSLFNGALDHSHGHEDHCHSHGAKHGGAHSHDHDHAHGHGHLHSH) is his-rich loop. Topologically, residues 162–238 (GGHGHSHGSG…AGPSRQILQG (77 aa)) are cytoplasmic. The interval 186–228 (SHGHEDHCHSHGAKHGGAHSHDHDHAHGHGHLHSHDGPSFKET) is disordered. The span at 204-224 (HSHDHDHAHGHGHLHSHDGPS) shows a compositional bias: basic and acidic residues. A helical transmembrane segment spans residues 239 to 259 (VFLHILADTLGSIGVIASAIM). Over 260–264 (MQNFG) the chain is Lumenal. The chain crosses the membrane as a helical span at residues 265–285 (LMIADPICSILIAILIVVSVI). The Cytoplasmic portion of the chain corresponds to 286-378 (PLLRESIGIL…LYVQIDFAAM (93 aa)).

The protein belongs to the cation diffusion facilitator (CDF) transporter (TC 2.A.4) family. SLC30A subfamily. As to quaternary structure, homooligomer.

Its subcellular location is the golgi apparatus membrane. The protein resides in the cytoplasmic vesicle. It localises to the golgi apparatus. The protein localises to the trans-Golgi network. It is found in the sarcoplasmic reticulum. Its subcellular location is the mitochondrion. The enzyme catalyses Zn(2+)(in) = Zn(2+)(out). Its function is as follows. Zinc ion transporter mediating zinc entry from the cytosol into the lumen of organelles along the secretory pathway. By contributing to zinc ion homeostasis within the early secretory pathway, regulates the activation and folding of enzymes like alkaline phosphatases. This is Zinc transporter 7 from Rattus norvegicus (Rat).